The following is a 101-amino-acid chain: RNA-binding protein Hfq (101 aa).

The 60-residue stretch at 9–68 folds into the Sm domain; it reads DPFLNALRRERVPVSIYLVNGIKLQGQVESFDQFVILLKNTVSQMVYKHAISTVVPSPPV. The interval 62–101 is disordered; sequence VVPSPPVSHHSNTPSGSTNNYHGSNPSAPQQPQQDSDDAE. The span at 70–86 shows a compositional bias: polar residues; it reads HHSNTPSGSTNNYHGSN.

It belongs to the Hfq family. As to quaternary structure, homohexamer.

Functionally, RNA chaperone that binds small regulatory RNA (sRNAs) and mRNAs to facilitate mRNA translational regulation in response to envelope stress, environmental stress and changes in metabolite concentrations. Also binds with high specificity to tRNAs. The sequence is that of RNA-binding protein Hfq from Yersinia pestis (strain Pestoides F).